Consider the following 291-residue polypeptide: Light-independent protochlorophyllide reductase iron-sulfur ATP-binding protein (291 aa).

ATP contacts are provided by residues 10 to 15 and Lys-39; that span reads GIGKST. Ser-14 contributes to the Mg(2+) binding site. [4Fe-4S] cluster-binding residues include Cys-95 and Cys-129. Position 180–181 (180–181) interacts with ATP; sequence NR.

The protein belongs to the NifH/BchL/ChlL family. In terms of assembly, homodimer. Protochlorophyllide reductase is composed of three subunits; ChlL, ChlN and ChlB. [4Fe-4S] cluster is required as a cofactor.

Its subcellular location is the plastid. It localises to the chloroplast. It carries out the reaction chlorophyllide a + oxidized 2[4Fe-4S]-[ferredoxin] + 2 ADP + 2 phosphate = protochlorophyllide a + reduced 2[4Fe-4S]-[ferredoxin] + 2 ATP + 2 H2O. Its pathway is porphyrin-containing compound metabolism; chlorophyll biosynthesis (light-independent). Its function is as follows. Component of the dark-operative protochlorophyllide reductase (DPOR) that uses Mg-ATP and reduced ferredoxin to reduce ring D of protochlorophyllide (Pchlide) to form chlorophyllide a (Chlide). This reaction is light-independent. The L component serves as a unique electron donor to the NB-component of the complex, and binds Mg-ATP. The polypeptide is Light-independent protochlorophyllide reductase iron-sulfur ATP-binding protein (Pinus koraiensis (Korean pine)).